Reading from the N-terminus, the 227-residue chain is ATP-dependent dethiobiotin synthetase BioD (227 aa).

12 to 17 (DAGKTH) contacts ATP. Thr16 lines the Mg(2+) pocket. Residue Lys37 is part of the active site. Ser41 lines the substrate pocket. Residues Asp54, 116 to 119 (EGAG), 176 to 177 (NQ), and 205 to 207 (PYS) each bind ATP. Positions 54 and 116 each coordinate Mg(2+).

Belongs to the dethiobiotin synthetase family. Homodimer. The cofactor is Mg(2+).

Its subcellular location is the cytoplasm. The enzyme catalyses (7R,8S)-7,8-diammoniononanoate + CO2 + ATP = (4R,5S)-dethiobiotin + ADP + phosphate + 3 H(+). It participates in cofactor biosynthesis; biotin biosynthesis; biotin from 7,8-diaminononanoate: step 1/2. Catalyzes a mechanistically unusual reaction, the ATP-dependent insertion of CO2 between the N7 and N8 nitrogen atoms of 7,8-diaminopelargonic acid (DAPA, also called 7,8-diammoniononanoate) to form a ureido ring. This Pseudoalteromonas translucida (strain TAC 125) protein is ATP-dependent dethiobiotin synthetase BioD.